Consider the following 89-residue polypeptide: Small ribosomal subunit protein uS15 (89 aa).

Belongs to the universal ribosomal protein uS15 family. In terms of assembly, part of the 30S ribosomal subunit. Forms a bridge to the 50S subunit in the 70S ribosome, contacting the 23S rRNA.

In terms of biological role, one of the primary rRNA binding proteins, it binds directly to 16S rRNA where it helps nucleate assembly of the platform of the 30S subunit by binding and bridging several RNA helices of the 16S rRNA. Its function is as follows. Forms an intersubunit bridge (bridge B4) with the 23S rRNA of the 50S subunit in the ribosome. The polypeptide is Small ribosomal subunit protein uS15 (Bifidobacterium adolescentis (strain ATCC 15703 / DSM 20083 / NCTC 11814 / E194a)).